The sequence spans 459 residues: Transcriptional coactivator YAP1 (459 aa).

4 positions are modified to phosphoserine; by LATS1 and LATS2: serine 21, serine 69, serine 87, and serine 119. Disordered regions lie at residues 51-88 (LPDSFFKPPEPKSHSRQASTDAGSGGVLTPHHVRAHSS) and 103-129 (SGMASAGASPQHLRQSSYEIPDDVPLP). WW domains are found at residues 126–159 (VPLPPGWEMAKTSSGQRYFLNHIDQTTTWQDPRK) and 186–219 (GPLPEGWEQAITPEGEIYYINHKNKTTSWLDPRL). Disordered regions lie at residues 231-254 (TQSAPVKQGGPLPPNPHGGVMGGN) and 307-364 (PTSM…SSYS). The transactivation domain stretch occupies residues 247 to 459 (HGGVMGGNNQ…IDKESFLTWL (213 aa)). Polar residues-rich tracts occupy residues 307–347 (PTSM…SGTY) and 355–364 (DSGLSMSSYS).

The protein belongs to the YAP1 family. Phosphorylated by lats1 and lats2; leading to cytoplasmic translocation and inactivation. As to expression, ubiquitously expressed throughout development.

The protein localises to the cytoplasm. It localises to the nucleus. Its subcellular location is the cell junction. The protein resides in the tight junction. It is found in the cell membrane. Functionally, transcriptional regulator which can act both as a coactivator and a corepressor and is the critical downstream regulatory target in the Hippo signaling pathway that plays a pivotal role in organ size control and tumor suppression by restricting proliferation and promoting apoptosis. Plays a key role in tissue tension and 3D tissue shape by regulating cortical actomyosin network formation. This is Transcriptional coactivator YAP1 from Oryzias latipes (Japanese rice fish).